The following is a 318-amino-acid chain: Methionyl-tRNA formyltransferase (318 aa).

112–115 lines the (6S)-5,6,7,8-tetrahydrofolate pocket; the sequence is SILP.

It belongs to the Fmt family.

The enzyme catalyses L-methionyl-tRNA(fMet) + (6R)-10-formyltetrahydrofolate = N-formyl-L-methionyl-tRNA(fMet) + (6S)-5,6,7,8-tetrahydrofolate + H(+). Its function is as follows. Attaches a formyl group to the free amino group of methionyl-tRNA(fMet). The formyl group appears to play a dual role in the initiator identity of N-formylmethionyl-tRNA by promoting its recognition by IF2 and preventing the misappropriation of this tRNA by the elongation apparatus. The protein is Methionyl-tRNA formyltransferase of Shewanella baltica (strain OS185).